The chain runs to 380 residues: MAPWTLWRCCQRVVGWVPVLFITFVVVWSYYAYVVELCVSTISRTGEKGKTVVYLVAFHLFFVMFVWSYWMTIFTSPASPSKEFYLSNSEKERYEKEFSQERQQDILRRAARDLPIYTTSASKAIRYCEKCQLIKPDRAHHCSACDRCVLKMDHHCPWVNNCVGFTNYKFFMLFLLYSLLYCLFVAATVLEYFIKFWTLCRRKSTENCPKNEPTVLNFPSAKFHVLFLFFVSAMFFVSVLSLFSYHCWLVGKNRTTIESFRAPMFSYGIDGNGFSLGCSKNWRQVFGDEKKYWLVPIFSSLGDGCSFPARLVGMDPEQASVANQSDYVRSIGSNQPFPIKPLSESKNRLLDSESQWLENGAEEGVTKSGTNNHVTVEIEN.

The Cytoplasmic segment spans residues methionine 1–valine 14. The chain crosses the membrane as a helical span at residues glycine 15–valine 35. Topologically, residues glutamate 36–valine 53 are lumenal. Residues tyrosine 54–phenylalanine 74 form a helical membrane-spanning segment. The Cytoplasmic portion of the chain corresponds to threonine 75–lysine 169. The DHHC domain occupies arginine 126–leucine 176. The Zn(2+) site is built by cysteine 128 and cysteine 131. Substrate contacts are provided by residues lysine 135 and histidine 140 to serine 143. Zn(2+)-binding residues include histidine 141, cysteine 142, cysteine 145, cysteine 148, and histidine 155. Cysteine 156 serves as the catalytic S-palmitoyl cysteine intermediate. Position 162 (cysteine 162) interacts with Zn(2+). The helical transmembrane segment at phenylalanine 170–leucine 190 threads the bilayer. Over glutamate 191 to lysine 222 the chain is Lumenal. Residues phenylalanine 223–histidine 246 form a helical membrane-spanning segment. At cysteine 247 to asparagine 380 the chain is on the cytoplasmic side. Serine 320, serine 345, and serine 354 each carry phosphoserine.

Belongs to the DHHC palmitoyltransferase family. Autopalmitoylated (in vitro). Highest levels in lung.

The protein resides in the golgi apparatus membrane. Its subcellular location is the cell membrane. It is found in the cytoplasm. It localises to the perinuclear region. The protein localises to the endoplasmic reticulum membrane. The protein resides in the endoplasmic reticulum-Golgi intermediate compartment membrane. It carries out the reaction L-cysteinyl-[protein] + hexadecanoyl-CoA = S-hexadecanoyl-L-cysteinyl-[protein] + CoA. It catalyses the reaction L-cysteinyl-[protein] + tetradecanoyl-CoA = S-tetradecanoyl-L-cysteinyl-[protein] + CoA. The catalysed reaction is L-cysteinyl-[protein] + octadecanoyl-CoA = S-octadecanoyl-L-cysteinyl-[protein] + CoA. Its function is as follows. Palmitoyltransferase that could catalyze the addition of palmitate onto various protein substrates. Catalyzes palmitoylation of Cys residues in the cytoplasmic C-terminus of EGFR, and modulates the duration of EGFR signaling by modulating palmitoylation-dependent EGFR internalization and degradation. Has a preference for acyl-CoA with C16 fatty acid chains. Can also utilize acyl-CoA with C14 and C18 fatty acid chains. May palmitoylate CALHM1 subunit of gustatory voltage-gated ion channels and modulate channel gating and kinetics. The protein is Palmitoyltransferase ZDHHC20 of Mus musculus (Mouse).